The chain runs to 457 residues: uncharacterized protein (457 aa).

This is an uncharacterized protein from Synechocystis sp. (strain ATCC 27184 / PCC 6803 / Kazusa).